Here is a 493-residue protein sequence, read N- to C-terminus: MSVQILHRRQSNNSDLPLPTASLPVQPAQAAAEAVAAVVARARQAQREFARADQATVDTAVAAAAWAIMEPARNRQLAERAVADTGLGNVDDKIRKNHRKTLGLLRDLHGRRTVGVIAQDAAAGITEIARPVGVVAAITPSTNPAATPANKIINALKCGNSVILAPSPKGQDTCALLLSFIHAEFARAGLPADLVQMLPAPVSKTATAELMRQADLVVATGSQANVRMAYTCGTPAFGVGAGNVASIIDASATLDDAAAKVARSKTFDNATSCSSENSLVVVDAVYTPMLDALAAVGGVLLTASEKARLQALMWRDAKLAGSFTGQSATRIAELAGLERVRALQPAMLLVEETGVGSDYPFSGEKLSPVLTLYRATDFAAAVERVASLYAYMGAGHSVSLHSSNPRHALQLGQELPVARVIVNQAHCFATGGNFDNGLPFSLSMGCGTWGGNNFSDNLGWRQYLNITRIAVPIAEHVPDEADLLGDYFARVGK.

The span at 1 to 10 (MSVQILHRRQ) shows a compositional bias: basic residues. The tract at residues 1–21 (MSVQILHRRQSNNSDLPLPTA) is disordered. Catalysis depends on C273, which acts as the Nucleophile.

This sequence belongs to the aldehyde dehydrogenase family. Homodimer.

Its subcellular location is the cytoplasm. The catalysed reaction is sulfoacetaldehyde + NADP(+) + CoA = sulfoacetyl-CoA + NADPH + H(+). Its function is as follows. Involved in the degradation of sulfoacetate, a widespread natural product. Catalyzes the conversion of sulfoacetyl-CoA and NADPH to sulfoacetaldehyde, CoA and NADP(+). Specific for NADP(+) and sulfoacetaldehyde. The polypeptide is Sulfoacetaldehyde dehydrogenase (acylating) (Cupriavidus necator (strain ATCC 17699 / DSM 428 / KCTC 22496 / NCIMB 10442 / H16 / Stanier 337) (Ralstonia eutropha)).